The primary structure comprises 474 residues: Ribulose bisphosphate carboxylase large chain (474 aa).

Residues asparagine 122 and threonine 172 each coordinate substrate. The active-site Proton acceptor is the lysine 174. Lysine 176 lines the substrate pocket. Mg(2+) contacts are provided by lysine 200, aspartate 202, and glutamate 203. Lysine 200 carries the post-translational modification N6-carboxylysine. The Proton acceptor role is filled by histidine 293. 3 residues coordinate substrate: arginine 294, histidine 326, and serine 378.

The protein belongs to the RuBisCO large chain family. Type I subfamily. In terms of assembly, heterohexadecamer of 8 large chains and 8 small chains; disulfide-linked. The disulfide link is formed within the large subunit homodimers. The cofactor is Mg(2+). Post-translationally, the disulfide bond which can form in the large chain dimeric partners within the hexadecamer appears to be associated with oxidative stress and protein turnover.

Its subcellular location is the carboxysome. It carries out the reaction 2 (2R)-3-phosphoglycerate + 2 H(+) = D-ribulose 1,5-bisphosphate + CO2 + H2O. The enzyme catalyses D-ribulose 1,5-bisphosphate + O2 = 2-phosphoglycolate + (2R)-3-phosphoglycerate + 2 H(+). Its function is as follows. RuBisCO catalyzes two reactions: the carboxylation of D-ribulose 1,5-bisphosphate, the primary event in carbon dioxide fixation, as well as the oxidative fragmentation of the pentose substrate in the photorespiration process. Both reactions occur simultaneously and in competition at the same active site. The polypeptide is Ribulose bisphosphate carboxylase large chain (Synechococcus sp. (strain JA-3-3Ab) (Cyanobacteria bacterium Yellowstone A-Prime)).